The chain runs to 246 residues: Bis(5'-nucleosyl)-tetraphosphatase PrpE [asymmetrical] (246 aa).

Belongs to the PrpE family. Ni(2+) serves as cofactor.

It catalyses the reaction P(1),P(4)-bis(5'-guanosyl) tetraphosphate + H2O = GMP + GTP + 2 H(+). Functionally, asymmetrically hydrolyzes Ap4p to yield AMP and ATP. The protein is Bis(5'-nucleosyl)-tetraphosphatase PrpE [asymmetrical] of Bacillus thuringiensis (strain Al Hakam).